A 250-amino-acid chain; its full sequence is Methylthioribulose-1-phosphate dehydratase (250 aa).

Cys-103 contributes to the substrate binding site. 2 residues coordinate Zn(2+): His-121 and His-123. The active-site Proton donor/acceptor is the Glu-146. Residue His-211 coordinates Zn(2+).

This sequence belongs to the aldolase class II family. MtnB subfamily. Zn(2+) serves as cofactor.

It is found in the cytoplasm. The catalysed reaction is 5-(methylsulfanyl)-D-ribulose 1-phosphate = 5-methylsulfanyl-2,3-dioxopentyl phosphate + H2O. It functions in the pathway amino-acid biosynthesis; L-methionine biosynthesis via salvage pathway; L-methionine from S-methyl-5-thio-alpha-D-ribose 1-phosphate: step 2/6. Catalyzes the dehydration of methylthioribulose-1-phosphate (MTRu-1-P) into 2,3-diketo-5-methylthiopentyl-1-phosphate (DK-MTP-1-P). This Clavispora lusitaniae (strain ATCC 42720) (Yeast) protein is Methylthioribulose-1-phosphate dehydratase.